Consider the following 104-residue polypeptide: AVIToxin-VAR1 (104 aa).

Residues 1-19 form the signal peptide; sequence MRSLLCAPLLLLLLSAGES. 5 disulfides stabilise this stretch: C26–C38, C32–C50, C37–C78, C60–C86, and C80–C96.

This sequence belongs to the AVIT (prokineticin) family. In terms of tissue distribution, expressed by the venom gland.

The protein localises to the secreted. In terms of biological role, potent agonist for both PKR1/PROKR1 and PKR2/PROKR2. Potently contracts gastrointestinal (GI) smooth muscle. This Varanus varius (Lace monitor lizard) protein is AVIToxin-VAR1.